We begin with the raw amino-acid sequence, 59 residues long: Protein translocase subunit SecE (59 aa).

A helical transmembrane segment spans residues 37–57; sequence GIGIIIIGVIGFIISIIAQLL.

It belongs to the SecE/SEC61-gamma family. In terms of assembly, component of the Sec protein translocase complex. Heterotrimer consisting of SecY (alpha), SecG (beta) and SecE (gamma) subunits. The heterotrimers can form oligomers, although 1 heterotrimer is thought to be able to translocate proteins. Interacts with the ribosome. May interact with SecDF, and other proteins may be involved.

Its subcellular location is the cell membrane. In terms of biological role, essential subunit of the Sec protein translocation channel SecYEG. Clamps together the 2 halves of SecY. May contact the channel plug during translocation. This is Protein translocase subunit SecE from Methanothermobacter thermautotrophicus (strain ATCC 29096 / DSM 1053 / JCM 10044 / NBRC 100330 / Delta H) (Methanobacterium thermoautotrophicum).